We begin with the raw amino-acid sequence, 288 residues long: MAVGKEILTKIRSVQNTQKITRAMQMVSTSKMRKTQERMRAARPYAEKVRTVMAHLAQANAELGHPLLARRETIKRAGIILVSSDKGLCGGLNVNSFKRFFGKVKELQDQGIEVDVCCLGQKGLAAAQRARLNVVASAVHLGDMPKMEKLIGPLTVLFRQYAEGELDAVYIVYSSFVNTMKQEPALEQLLPLTPHHMVVEHSHSWDYLYEPDAPTLMEFLVRRYLESVVYQALAENMASEQAARMVAMKAATDNAGNTIKQLRLVYNKARQAAITTELSEIVAGAAAV.

Belongs to the ATPase gamma chain family. In terms of assembly, F-type ATPases have 2 components, CF(1) - the catalytic core - and CF(0) - the membrane proton channel. CF(1) has five subunits: alpha(3), beta(3), gamma(1), delta(1), epsilon(1). CF(0) has three main subunits: a, b and c.

It is found in the cell inner membrane. In terms of biological role, produces ATP from ADP in the presence of a proton gradient across the membrane. The gamma chain is believed to be important in regulating ATPase activity and the flow of protons through the CF(0) complex. This is ATP synthase gamma chain from Chromobacterium violaceum (strain ATCC 12472 / DSM 30191 / JCM 1249 / CCUG 213 / NBRC 12614 / NCIMB 9131 / NCTC 9757 / MK).